Reading from the N-terminus, the 731-residue chain is DNA ligase (731 aa).

NAD(+) is bound by residues 59-63, 108-109, and Glu142; these read DSEYD and SL. The active-site N6-AMP-lysine intermediate is the Lys144. Arg165, Glu202, Lys318, and Lys342 together coordinate NAD(+). Zn(2+)-binding residues include Cys434, Cys437, Cys452, and Cys458. In terms of domain architecture, BRCT spans 645–731; that stretch reads LASSPLSGKI…ENDGQDSIKI (87 aa).

Belongs to the NAD-dependent DNA ligase family. LigA subfamily. The cofactor is Mg(2+). Mn(2+) is required as a cofactor.

The catalysed reaction is NAD(+) + (deoxyribonucleotide)n-3'-hydroxyl + 5'-phospho-(deoxyribonucleotide)m = (deoxyribonucleotide)n+m + AMP + beta-nicotinamide D-nucleotide.. Functionally, DNA ligase that catalyzes the formation of phosphodiester linkages between 5'-phosphoryl and 3'-hydroxyl groups in double-stranded DNA using NAD as a coenzyme and as the energy source for the reaction. It is essential for DNA replication and repair of damaged DNA. The chain is DNA ligase from Zymomonas mobilis subsp. mobilis (strain ATCC 31821 / ZM4 / CP4).